The primary structure comprises 381 residues: MSETSCSFFIEKEFQDGQLENVSAGLSSSYKDKGALMAFRGIPISELTNHGILQALTAETNGWQPGVVSEEVLRAQEEWEVVDTIHPDIESGVHCQQPGQLISFNEALEHFQSVDLSSFKKRIQPTIQRTGLAALRHCLFGPPKLHQGLREERDLVLTIAQCGLDSQNPTHGRVLQTIYKKLTGSKFDCALHGDHWEDLGFQGANPATDLRGAGFLALLHLLYLVMDSKTFLMAQEIFRLSHHHIQQFPFCLMSVNITRIAIQALREECLSRECNRRQKVIPVVNSFYAATFLHLARVWRTQQKTILDSGFVLKDLEALAKKSPKRLLKTLDDYLAQVSKGQTSLLEAHKRPGSQGPHSRDLTFTGVCDLQSHSFESAGLI.

The 155-residue stretch at 170–324 folds into the ELMO domain; sequence THGRVLQTIY…DLEALAKKSP (155 aa).

As to expression, both isoform 1 and isoform 2 are widely expressed.

The protein resides in the cell projection. It localises to the stereocilium. It is found in the kinocilium. The protein localises to the cytoplasm. Its subcellular location is the cytoskeleton. Functionally, acts as a GTPase-activating protein (GAP) for ARL2 with low specific activity. This is ELMO domain-containing protein 3 (Elmod3) from Mus musculus (Mouse).